Consider the following 57-residue polypeptide: UPF0391 membrane protein RPE_2138 (57 aa).

Helical transmembrane passes span 4-24 (WVVT…GGIA) and 30-50 (IAKI…VIGL).

The protein belongs to the UPF0391 family.

The protein localises to the cell membrane. The sequence is that of UPF0391 membrane protein RPE_2138 from Rhodopseudomonas palustris (strain BisA53).